We begin with the raw amino-acid sequence, 258 residues long: Casein kinase II subunit beta' (258 aa).

Residues 1 to 10 (MGSRSENVGT) show a composition bias toward polar residues. Residues 1–29 (MGSRSENVGTVTREGSRVEQDDVLMDDDS) are disordered.

The protein belongs to the casein kinase 2 subunit beta family. Tetramer composed of an alpha subunit, an alpha' subunit, one beta subunit and one beta' subunit. Interacts with FACT subunits POB3 and SPT16. Interaction with YTA7. In terms of processing, phosphorylated by alpha subunit. The N-terminus is blocked.

Regulatory subunit of casein kinase II/CK2. As part of the kinase complex regulates the basal catalytic activity of the alpha subunit a constitutively active serine/threonine-protein kinase that phosphorylates a large number of substrates containing acidic residues C-terminal to the phosphorylated serine or threonine. The chain is Casein kinase II subunit beta' from Saccharomyces cerevisiae (strain ATCC 204508 / S288c) (Baker's yeast).